Here is a 247-residue protein sequence, read N- to C-terminus: uncharacterized protein (247 aa).

This is an uncharacterized protein from Saccharomyces cerevisiae (strain ATCC 204508 / S288c) (Baker's yeast).